The chain runs to 291 residues: Undecaprenyl-diphosphatase 2 (291 aa).

6 consecutive transmembrane segments (helical) span residues 39 to 59, 85 to 105, 118 to 138, 203 to 223, 231 to 251, and 262 to 282; these read PGAA…LIYF, AQMG…GVTL, ITAT…RLAA, FLLA…DAAA, PTVF…AWFM, and FVWY…TGAL.

The protein belongs to the UppP family.

The protein localises to the cell membrane. The catalysed reaction is di-trans,octa-cis-undecaprenyl diphosphate + H2O = di-trans,octa-cis-undecaprenyl phosphate + phosphate + H(+). Catalyzes the dephosphorylation of undecaprenyl diphosphate (UPP). Confers resistance to bacitracin. The sequence is that of Undecaprenyl-diphosphatase 2 from Streptomyces avermitilis (strain ATCC 31267 / DSM 46492 / JCM 5070 / NBRC 14893 / NCIMB 12804 / NRRL 8165 / MA-4680).